The following is a 1465-amino-acid chain: DNA polymerase III PolC-type (1465 aa).

The Exonuclease domain maps to 427–583; it reads YVVFDVETTG…YDAEATGRLL (157 aa).

This sequence belongs to the DNA polymerase type-C family. PolC subfamily.

It is found in the cytoplasm. The enzyme catalyses DNA(n) + a 2'-deoxyribonucleoside 5'-triphosphate = DNA(n+1) + diphosphate. In terms of biological role, required for replicative DNA synthesis. This DNA polymerase also exhibits 3' to 5' exonuclease activity. The chain is DNA polymerase III PolC-type from Streptococcus pyogenes serotype M4 (strain MGAS10750).